The chain runs to 392 residues: Formate-dependent phosphoribosylglycinamide formyltransferase (392 aa).

Residues 22–23 (EL) and E82 each bind N(1)-(5-phospho-beta-D-ribosyl)glycinamide. Residues R114, K155, 160–165 (SSGKGQ), 195–198 (EGVV), and E203 contribute to the ATP site. Positions 119-308 (RLAAEELQLP…EFALHVRAFL (190 aa)) constitute an ATP-grasp domain. Residues E267 and E279 each contribute to the Mg(2+) site. N(1)-(5-phospho-beta-D-ribosyl)glycinamide-binding positions include D286, K355, and 362–363 (RR).

It belongs to the PurK/PurT family. As to quaternary structure, homodimer.

The enzyme catalyses N(1)-(5-phospho-beta-D-ribosyl)glycinamide + formate + ATP = N(2)-formyl-N(1)-(5-phospho-beta-D-ribosyl)glycinamide + ADP + phosphate + H(+). The protein operates within purine metabolism; IMP biosynthesis via de novo pathway; N(2)-formyl-N(1)-(5-phospho-D-ribosyl)glycinamide from N(1)-(5-phospho-D-ribosyl)glycinamide (formate route): step 1/1. Involved in the de novo purine biosynthesis. Catalyzes the transfer of formate to 5-phospho-ribosyl-glycinamide (GAR), producing 5-phospho-ribosyl-N-formylglycinamide (FGAR). Formate is provided by PurU via hydrolysis of 10-formyl-tetrahydrofolate. In Shigella sonnei (strain Ss046), this protein is Formate-dependent phosphoribosylglycinamide formyltransferase.